The sequence spans 777 residues: Glucocorticoid receptor (777 aa).

Over residues 1 to 14 (MDSKESLTPGKEEN) the composition is skewed to basic and acidic residues. Residues 1–23 (MDSKESLTPGKEENPSSVLTQER) are disordered. A modulating region spans residues 1-420 (MDSKESLTPG…TATTGPPPKL (420 aa)). Position 8 is a phosphothreonine (threonine 8). Position 23 is an omega-N-methylarginine (arginine 23). Phosphoserine occurs at positions 45, 113, 134, and 141. Residues 130-182 (NRSTSVPENPKSSASSSVSAAPKEKEFPKTHSDVSSEQQNLKGQTGTNGGNVK) are disordered. Over residues 134–150 (SVPENPKSSASSSVSAA) the composition is skewed to low complexity. Positions 151–163 (PKEKEFPKTHSDV) are enriched in basic and acidic residues. The segment covering 164-174 (SSEQQNLKGQT) has biased composition (polar residues). Residues serine 203, serine 211, and serine 226 each carry the phosphoserine modification. Residue lysine 258 forms a Glycyl lysine isopeptide (Lys-Gly) (interchain with G-Cter in SUMO2) linkage. Phosphoserine is present on serine 267. Glycyl lysine isopeptide (Lys-Gly) (interchain with G-Cter in SUMO); alternate cross-links involve residues lysine 277 and lysine 293. Glycyl lysine isopeptide (Lys-Gly) (interchain with G-Cter in SUMO2); alternate cross-links involve residues lysine 277 and lysine 293. The segment covering 394-414 (SSPSMRPDVSSPPSSSSTATT) has biased composition (low complexity). Residues 394 to 415 (SSPSMRPDVSSPPSSSSTATTG) are disordered. Residue serine 404 is modified to Phosphoserine. Lysine 419 is covalently cross-linked (Glycyl lysine isopeptide (Lys-Gly) (interchain with G-Cter in ubiquitin)). 2 NR C4-type zinc fingers span residues 421–441 (CLVCSDEASGCHYGVLTCGSC) and 457–481 (CAGRNDCIIDKIRRKNCPACRYRKC). Positions 421–486 (CLVCSDEASG…RYRKCLQAGM (66 aa)) form a DNA-binding region, nuclear receptor. N6-acetyllysine is present on residues lysine 480, lysine 492, lysine 494, and lysine 495. Residues 485–777 (GMNLEARKTK…NIKKLLFHQK (293 aa)) form an interaction with CLOCK region. Residues 487-523 (NLEARKTKKKIKGIQQATTGVSQETSENPANKTIVPA) are hinge. Residues 524–758 (TLPQLTPTLV…FPEMLAEIIT (235 aa)) enclose the NR LBD domain. The interaction with CRY1 stretch occupies residues 532 to 697 (LVSLLEVIEP…EIRMTYIKEL (166 aa)). A Glycyl lysine isopeptide (Lys-Gly) (interchain with G-Cter in SUMO) cross-link involves residue lysine 703.

Belongs to the nuclear hormone receptor family. NR3 subfamily. In terms of assembly, heteromultimeric cytoplasmic complex with HSP90AA1, HSPA1A/HSPA1B, and FKBP5 or another immunophilin such as PPID, STIP1, or the immunophilin homolog PPP5C. Upon ligand binding FKBP5 dissociates from the complex and FKBP4 takes its place, thereby linking the complex to dynein and mediating transport to the nucleus, where the complex dissociates. Probably forms a complex composed of chaperones HSP90 and HSP70, co-chaperones CDC37, PPP5C, TSC1 and client protein TSC2, CDK4, AKT, RAF1 and NR3C1; this complex does not contain co-chaperones STIP1/HOP and PTGES3/p23. Directly interacts with UNC45A. Binds to DNA as a homodimer, and as heterodimer with NR3C2 or the retinoid X receptor. Binds STAT5A and STAT5B homodimers and heterodimers. Interacts with NRIP1, POU2F1, POU2F2 and TRIM28. Interacts with several coactivator complexes, including the SMARCA4 complex, CREBBP/EP300, TADA2L (Ada complex) and p160 coactivators such as NCOA2 and NCOA6. Interaction with BAG1 inhibits transactivation. Interacts with HEXIM1 and TGFB1I1. Interacts with NCOA1. Interacts with NCOA3, SMARCA4, SMARCC1, SMARCD1, and SMARCE1. Interacts with CLOCK, CRY1 and CRY2 in a ligand-dependent fashion. Interacts with CIART. Interacts with RWDD3. Interacts with UBE2I/UBC9 and this interaction is enhanced in the presence of RWDD3. Interacts with GRIP1. Interacts with NR4A3 (via nuclear receptor DNA-binding domain), represses transcription activity of NR4A3 on the POMC promoter Nur response element (NurRE). Directly interacts with PNRC2 to attract and form a complex with UPF1 and DCP1A; the interaction leads to rapid mRNA degradation. Interacts with GSK3B. Interacts with FNIP1 and FNIP2. Interacts (via C-terminus) with HNRNPU (via C-terminus). Interacts with MCM3AP. Interacts (via domain NR LBD) with HSP90AA1 and HSP90AB1. In the absence of hormonal ligand, interacts with TACC1. Interacts (via NR LBD domain) with ZNF764 (via KRAB domain); the interaction regulates transcription factor activity of NR3C1 by directing its actions toward certain biologic pathways. In terms of processing, acetylation by CLOCK reduces its binding to glucocorticoid response elements and its transcriptional activity. Post-translationally, increased proteasome-mediated degradation in response to glucocorticoids. Phosphorylated in the absence of hormone; becomes hyperphosphorylated in the presence of glucocorticoid. The Ser-203, Ser-226 and Ser-404-phosphorylated forms are mainly cytoplasmic, and the Ser-211-phosphorylated form is nuclear. Phosphorylation at Ser-211 increases transcriptional activity. Phosphorylation at Ser-203, Ser-226 and Ser-404 decreases signaling capacity. Phosphorylation at Ser-404 may protect from glucocorticoid-induced apoptosis. Phosphorylation at Ser-203 and Ser-211 is not required in regulation of chromosome segregation. May be dephosphorylated by PPP5C, attenuates NR3C1 action. In terms of processing, ubiquitinated by UBR5, leading to its degradation: UBR5 specifically recognizes and binds ligand-bound NR3C1 when it is not associated with coactivators (NCOAs). In presence of NCOAs, the UBR5-degron is not accessible, preventing its ubiquitination and degradation. Post-translationally, sumoylation at Lys-277 and Lys-293 negatively regulates its transcriptional activity. Sumoylation at Lys-703 positively regulates its transcriptional activity in the presence of RWDD3. Sumoylation at Lys-277 and Lys-293 is dispensable whereas sumoylation at Lys-703 is critical for the stimulatory effect of RWDD3 on its transcriptional activity. Heat shock increases sumoylation in a RWWD3-dependent manner.

The protein localises to the cytoplasm. The protein resides in the nucleus. It is found in the mitochondrion. Its subcellular location is the cytoskeleton. It localises to the spindle. The protein localises to the microtubule organizing center. The protein resides in the centrosome. It is found in the chromosome. Its subcellular location is the nucleoplasm. Its function is as follows. Receptor for glucocorticoids (GC). Has a dual mode of action: as a transcription factor that binds to glucocorticoid response elements (GRE), both for nuclear and mitochondrial DNA, and as a modulator of other transcription factors. Affects inflammatory responses, cellular proliferation and differentiation in target tissues. Involved in chromatin remodeling. Plays a role in rapid mRNA degradation by binding to the 5' UTR of target mRNAs and interacting with PNRC2 in a ligand-dependent manner which recruits the RNA helicase UPF1 and the mRNA-decapping enzyme DCP1A, leading to RNA decay. Could act as a coactivator for STAT5-dependent transcription upon growth hormone (GH) stimulation and could reveal an essential role of hepatic GR in the control of body growth. Mediates glucocorticoid-induced apoptosis. Promotes accurate chromosome segregation during mitosis. May act as a tumor suppressor. May play a negative role in adipogenesis through the regulation of lipolytic and antilipogenic gene expression. The protein is Glucocorticoid receptor (NR3C1) of Aotus nancymaae (Ma's night monkey).